The primary structure comprises 324 residues: ATP-dependent 6-phosphofructokinase (324 aa).

Position 15 (glycine 15) interacts with ATP. Residue 25–29 (RGVVR) coordinates ADP. ATP is bound by residues 76 to 77 (RF) and 106 to 109 (GDGS). Position 107 (aspartate 107) interacts with Mg(2+). 130–132 (TID) contacts substrate. Aspartate 132 functions as the Proton acceptor in the catalytic mechanism. Arginine 159 lines the ADP pocket. Residues arginine 167 and 174–176 (MGR) each bind substrate. Residues 190 to 192 (GCE), lysine 216, and 218 to 220 (KRH) contribute to the ADP site. Substrate contacts are provided by residues glutamate 227, arginine 248, and 254 to 257 (HIQR).

Belongs to the phosphofructokinase type A (PFKA) family. ATP-dependent PFK group I subfamily. Prokaryotic clade 'B1' sub-subfamily. In terms of assembly, homotetramer. Mg(2+) serves as cofactor.

The protein localises to the cytoplasm. The catalysed reaction is beta-D-fructose 6-phosphate + ATP = beta-D-fructose 1,6-bisphosphate + ADP + H(+). Its pathway is carbohydrate degradation; glycolysis; D-glyceraldehyde 3-phosphate and glycerone phosphate from D-glucose: step 3/4. Allosterically activated by ADP and other diphosphonucleosides, and allosterically inhibited by phosphoenolpyruvate. Functionally, catalyzes the phosphorylation of D-fructose 6-phosphate to fructose 1,6-bisphosphate by ATP, the first committing step of glycolysis. This chain is ATP-dependent 6-phosphofructokinase, found in Haemophilus ducreyi (strain 35000HP / ATCC 700724).